The sequence spans 372 residues: Peroxisomal biogenesis factor 3 (372 aa).

Residues 1-15 lie on the Cytoplasmic side of the membrane; that stretch reads MLRSMWNFLKRHKKK. The interval 1 to 45 is targeting to peroxisomes; it reads MLRSMWNFLKRHKKKCIFLGTVLGGVYILGKYGQKKIREIQEREA. Residues 16–36 traverse the membrane as a helical segment; the sequence is CIFLGTVLGGVYILGKYGQKK. Residues 37–116 lie on the Peroxisomal side of the membrane; it reads IREIQEREAA…LKIISFTRSI (80 aa). The helical transmembrane segment at 117-140 threads the bilayer; the sequence is VAVYSTCMLVVLLRVQLNIIGGYI. Residues 120–136 are interaction with PEX19; the sequence is YSTCMLVVLLRVQLNII. At 141–372 the chain is on the cytoplasmic side; that stretch reads YLDNATVGKN…AFSTPQQLEK (232 aa).

Belongs to the peroxin-3 family. In terms of assembly, interacts with PEX19. In terms of tissue distribution, identified in all tissues analyzed, with the strongest expression in liver and in testis.

It is found in the peroxisome membrane. Its function is as follows. Involved in peroxisome biosynthesis and integrity. Assembles membrane vesicles before the matrix proteins are translocated. As a docking factor for PEX19, is necessary for the import of peroxisomal membrane proteins in the peroxisomes. The chain is Peroxisomal biogenesis factor 3 (Pex3) from Mus musculus (Mouse).